The primary structure comprises 469 residues: Ribulose bisphosphate carboxylase large chain (469 aa).

Lysine 5 is modified (N6,N6,N6-trimethyllysine). Positions 114 and 164 each coordinate substrate. The active-site Proton acceptor is lysine 166. Lysine 168 contributes to the substrate binding site. 3 residues coordinate Mg(2+): lysine 192, aspartate 194, and glutamate 195. Lysine 192 is subject to N6-carboxylysine. The active-site Proton acceptor is histidine 285. Substrate contacts are provided by arginine 286, histidine 318, and serine 370.

Belongs to the RuBisCO large chain family. Type I subfamily. In terms of assembly, heterohexadecamer of 8 large chains and 8 small chains; disulfide-linked. The disulfide link is formed within the large subunit homodimers. The cofactor is Mg(2+). The disulfide bond which can form in the large chain dimeric partners within the hexadecamer appears to be associated with oxidative stress and protein turnover.

It localises to the plastid. Its subcellular location is the chloroplast. The catalysed reaction is 2 (2R)-3-phosphoglycerate + 2 H(+) = D-ribulose 1,5-bisphosphate + CO2 + H2O. It carries out the reaction D-ribulose 1,5-bisphosphate + O2 = 2-phosphoglycolate + (2R)-3-phosphoglycerate + 2 H(+). In terms of biological role, ruBisCO catalyzes two reactions: the carboxylation of D-ribulose 1,5-bisphosphate, the primary event in carbon dioxide fixation, as well as the oxidative fragmentation of the pentose substrate in the photorespiration process. Both reactions occur simultaneously and in competition at the same active site. The protein is Ribulose bisphosphate carboxylase large chain of Fleroya rubrostipulata (Mitragyna rubrostipulata).